A 2541-amino-acid chain; its full sequence is Talin-1 (2541 aa).

One can recognise an FERM domain in the interval 86–403 (RPLKIRMLDG…GYIDIILKKK (318 aa)). Positions 280–435 (FMAHKNCGNM…PKKSTVLQQQ (156 aa)) are interaction with LAYN. The helical bundle R1 stretch occupies residues 482–655 (RGHMPPLTSA…QTSGELLQQI (174 aa)). The interval 656 to 786 (GESDTDPRFQ…ALNDLLQHIK (131 aa)) is helical bundle R2. The helical bundle R3 stretch occupies residues 787–911 (QHATGGQPIG…NAAAQNAIKK (125 aa)). The interval 913–1043 (LVHKLEHAAK…RTAAQKAQEA (131 aa)) is helical bundle R4. The tract at residues 1045–1205 (GPLEIDSALG…NRCVNCLPGQ (161 aa)) is helical bundle R5. Residues 1206–1356 (RDVDAAIRMV…QLITMCTQQA (151 aa)) are helical bundle R6. Residues 1357–1452 (PGQKECDNAL…AYLVGVSDPN (96 aa)) are helical bundle R7A. Positions 1358-1658 (GQKECDNALR…NMRDKAPGQR (301 aa)) are interaction with VCL and F-actin. Residues 1460–1579 (LVDPTQFARA…NLTAFASNPE (120 aa)) are helical bundle R8. A glycan (O-linked (GlcNAc) threonine) is linked at T1486. Residues 1580 to 1652 (FATVPAQISP…IKKLITNMRD (73 aa)) are helical bundle R7B. The tract at residues 1654–1821 (APGQRECDEA…TLNEAASAAG (168 aa)) is helical bundle R9. The helical bundle R10 stretch occupies residues 1822–1972 (VVGGMVDSIT…VLAALQAGNR (151 aa)). O-linked (GlcNAc) threonine glycosylation occurs at T1889. The tract at residues 1973-2139 (GTQACITAAS…TVKAVEDEAT (167 aa)) is helical bundle R11. The segment at 2140–2293 (KGTRALEATI…QAAEAMKGTE (154 aa)) is helical bundle R12. One can recognise an I/LWEQ domain in the interval 2292–2531 (TEWVDPEDPT…MIRQQQYKFL (240 aa)). Residues 2299–2481 (DPTVIAENEL…AAQKAAAFQD (183 aa)) form a helical bundle R13 region.

In terms of assembly, interacts with PIP5K1C and NRAP. Binds with high affinity to vinculin VCL and with low affinity to integrins. Interacts with APBB1IP; this inhibits VCL binding. Interacts with F-actin. Interacts with LAYN. Interacts with THSD1. In terms of processing, phosphorylated.

It is found in the cell projection. Its subcellular location is the ruffle membrane. The protein resides in the cytoplasm. The protein localises to the cytoskeleton. It localises to the cell surface. It is found in the cell junction. Its subcellular location is the focal adhesion. Its function is as follows. High molecular weight cytoskeletal protein concentrated at regions of cell-substratum contact and, in lymphocytes, at cell-cell contacts. Involved in connections of major cytoskeletal structures to the plasma membrane. This Gallus gallus (Chicken) protein is Talin-1 (TLN1).